Reading from the N-terminus, the 496-residue chain is MDISILWVAIILVISSYFIFMNKWRAAKLPENLPPSPPKLPVIGHLHLLRGGLPQHVLRGITQKYGAVAHLQLGEVYSVVLSSAESTKQAMKVLDPTFADRFDSFGSQIMWYNNNDMIFSRYNDHWRQIRKICVSELLSPKNVRSFGFIRQDEMARLIRVFESSVGVPINASEEISKMSCAIVCRAAFGSVLKDQGLLADLVKEALGMASGFELADLYPSSWLLNLLCFNKYRLRRMRQRLDDILDGFLEEHRVKKSGEFGGEDIIDVLYRMQKDSENKVPITNSGIKGFIFDVFSAGTETSATTIQWALSELMKNPEKLAKAQAEVREKLKGKTNPDVAEVQEIKYPHSVVKETLRLHPPFPLIPRLCKEECEVTGYTIPAKTRILVNVWSIGRDPAYWKDPDTFNPDRFDEVSRDVIGNDFELIPFGAGRRICPGLHFGLANVEVPLAQLLYHFEWKLPQGMTPADMDMSETPGLSGPRKNPLIMVPTIHNPTS.

Residues 1–21 form a helical; Signal-anchor for type II membrane protein membrane-spanning segment; the sequence is MDISILWVAIILVISSYFIFM. C435 serves as a coordination point for heme. Positions 471 to 496 are disordered; it reads MSETPGLSGPRKNPLIMVPTIHNPTS.

It belongs to the cytochrome P450 family. Heme is required as a cofactor.

It localises to the membrane. The enzyme catalyses gamma-terpinene + 2 reduced [NADPH--hemoprotein reductase] + 2 O2 = carvacrol + 2 oxidized [NADPH--hemoprotein reductase] + 3 H2O + 2 H(+). The catalysed reaction is (4S)-limonene + reduced [NADPH--hemoprotein reductase] + O2 = (1S,5R)-carveol + oxidized [NADPH--hemoprotein reductase] + H2O + H(+). It catalyses the reaction (4R)-limonene + reduced [NADPH--hemoprotein reductase] + O2 = (1R,5S)-carveol + oxidized [NADPH--hemoprotein reductase] + H2O + H(+). It carries out the reaction alpha-terpinene + 2 reduced [NADPH--hemoprotein reductase] + 2 O2 = carvacrol + 2 oxidized [NADPH--hemoprotein reductase] + 3 H2O + 2 H(+). It functions in the pathway secondary metabolite biosynthesis; terpenoid biosynthesis. In terms of biological role, involved in the biosynthesis of phenolic monoterpenes natural products thymol and carvacrol which have a broad range of biological activities acting as antimicrobial compounds, insecticides, antioxidants and pharmaceutical agents. Catalyzes the C2-hydroxylation of gamma-terpinene and alpha-terpinene to produce carvacrol. Also mediates the C6-hydroxylation of (4S)-limonene and (4R)-limonene to form carveol. This is Cytochrome P450 71D181 from Thymus vulgaris (Thyme).